The primary structure comprises 375 residues: Queuine tRNA-ribosyltransferase (375 aa).

D89 functions as the Proton acceptor in the catalytic mechanism. Residues 89 to 93 (DSGGF), D143, Q187, and G214 each bind substrate. The interval 245 to 251 (GVGKPED) is RNA binding. Catalysis depends on D264, which acts as the Nucleophile. The RNA binding; important for wobble base 34 recognition stretch occupies residues 269–273 (TRNAR). Zn(2+) contacts are provided by C302, C304, C307, and H333.

This sequence belongs to the queuine tRNA-ribosyltransferase family. In terms of assembly, homodimer. Within each dimer, one monomer is responsible for RNA recognition and catalysis, while the other monomer binds to the replacement base PreQ1. Requires Zn(2+) as cofactor.

The catalysed reaction is 7-aminomethyl-7-carbaguanine + guanosine(34) in tRNA = 7-aminomethyl-7-carbaguanosine(34) in tRNA + guanine. Its pathway is tRNA modification; tRNA-queuosine biosynthesis. Functionally, catalyzes the base-exchange of a guanine (G) residue with the queuine precursor 7-aminomethyl-7-deazaguanine (PreQ1) at position 34 (anticodon wobble position) in tRNAs with GU(N) anticodons (tRNA-Asp, -Asn, -His and -Tyr). Catalysis occurs through a double-displacement mechanism. The nucleophile active site attacks the C1' of nucleotide 34 to detach the guanine base from the RNA, forming a covalent enzyme-RNA intermediate. The proton acceptor active site deprotonates the incoming PreQ1, allowing a nucleophilic attack on the C1' of the ribose to form the product. After dissociation, two additional enzymatic reactions on the tRNA convert PreQ1 to queuine (Q), resulting in the hypermodified nucleoside queuosine (7-(((4,5-cis-dihydroxy-2-cyclopenten-1-yl)amino)methyl)-7-deazaguanosine). In Salmonella choleraesuis (strain SC-B67), this protein is Queuine tRNA-ribosyltransferase.